Consider the following 879-residue polypeptide: Putative ankyrin repeat protein L88 (879 aa).

ANK repeat units follow at residues 22-62 (KGFT…QKNK), 63-96 (KGYTALSIAVRNCGNWCSYKTVRILLEKGAKTNI), 100-133 (EGITPLIFASFNSRFCEGFNVINLLLKYGADINA), 137-170 (NGYTALMNASSNSNSSSTYTTVKLLLDNDANIDD), 174-207 (NGLTCLMHACNNVTLKSSIGTIELLLYYGADINA), 211-241 (NGRTALMHACDNSNNIELIELLLNRGADIEA), 245-278 (KGLTCLMIASKYAGSINSVEVVEILINRGANIEA), 282-313 (KLRTPLMYACKYSHNNTSVIKLLLDKGANIET), 317-347 (RNNTALILASTYSSSVEPIKLLLDKGANINH), 351-384 (EGCNALNLACINSSYNNNSEIVKLLIDRGSNINN), 387-420 (SERTILTSTCEFIGKGSNIDTVKILLDNNADPNI), 424-463 (NGNTTLLYMCKKYIKDGPKKRDLNFNVIKLLLDYKANPNF), 470-499 (NSLTRLSKYSDKVDIEIIKLLLDYGVDINS), 506-542 (SALLLFCMDLQNSCTKISYNCKNIVKLLLEKGADVNI), 546-578 (NGNTALSIICESDDNNLSDIIELLLAHNANPNT), 674-704 (SGITALLHECQVSDNIEPIKLLLDNGADPNI), and 708-738 (KGETALHKAVRHTNKIDVIKLLMDYHANPYI).

This is Putative ankyrin repeat protein L88 from Acanthamoeba polyphaga mimivirus (APMV).